Reading from the N-terminus, the 727-residue chain is Endothelin-converting enzyme homolog (727 aa).

The Cytoplasmic segment spans residues 1 to 44 (MSFNFSRYSGAYTTTFSFLLLALLIVSAVLLSRPYAPALLHAEE). The helical; Signal-anchor for type II membrane protein transmembrane segment at 45 to 65 (AYCVSMSCVTAAASVLSLMDA) threads the bilayer. A Peptidase M13 domain is found at 46 to 727 (YCVSMSCVTA…MNPVHKCEVW (682 aa)). 5 cysteine pairs are disulfide-bonded: C47/C52, C70/C712, C78/C672, C134/C392, and C601/C724. Residues 66–727 (TADPCSDFYQ…MNPVHKCEVW (662 aa)) are Extracellular-facing. N138, N160, N164, N169, N222, N309, N337, N340, and N511 each carry an N-linked (GlcNAc...) asparagine glycan. Residue H564 coordinates Zn(2+). Residue E565 is part of the active site. Zn(2+) is bound at residue H568. N589 and N608 each carry an N-linked (GlcNAc...) asparagine glycan. Position 624 (E624) interacts with Zn(2+). Catalysis depends on D628, which acts as the Proton donor. N656 carries an N-linked (GlcNAc...) asparagine glycan.

Belongs to the peptidase M13 family. Zn(2+) is required as a cofactor. Highly expressed in brain and midgut, and to a lesser extent in fat body, ovaries, testes and haemocytes.

It localises to the cell membrane. The protein is Endothelin-converting enzyme homolog of Locusta migratoria (Migratory locust).